Here is a 150-residue protein sequence, read N- to C-terminus: Transcriptional repressor NrdR (150 aa).

The segment at 3–34 (CPFCHHPQSRVIDSRTVENGFVTRRRRQCTKC) is a zinc-finger region. The ATP-cone domain maps to 46–136 (LLVEKRNGVT…VYKSFSSMED (91 aa)).

The protein belongs to the NrdR family. Requires Zn(2+) as cofactor.

Negatively regulates transcription of bacterial ribonucleotide reductase nrd genes and operons by binding to NrdR-boxes. This Corynebacterium kroppenstedtii (strain DSM 44385 / JCM 11950 / CIP 105744 / CCUG 35717) protein is Transcriptional repressor NrdR.